The sequence spans 780 residues: TSC22 domain family protein 2 (780 aa).

Disordered stretches follow at residues A20–P86, T126–C158, A235–P499, L587–S607, and L736–A780. Over residues E28 to D37 the composition is skewed to acidic residues. Low complexity predominate over residues T126–P146. Polar residues predominate over residues G241–T262. Composition is skewed to low complexity over residues G297–G316, P344–Q361, and Q395–P412. The segment covering T415 to S434 has biased composition (polar residues). A compositionally biased stretch (low complexity) spans Q453–P468. Polar residues predominate over residues L736–S756. Residues P765–Q774 are compositionally biased toward pro residues.

This sequence belongs to the TSC-22/Dip/Bun family. In terms of assembly, interacts with NRBP1. Interacts with PKM isoform M2; the interaction results in reduced nuclear levels of PKM isoform M2, leading to repression of cyclin CCND1 transcription and reduced cell growth. Interacts with WDR77.

Reduces the level of nuclear PKM isoform M2 which results in repression of cyclin CCND1 transcription and reduced cell growth. The sequence is that of TSC22 domain family protein 2 from Homo sapiens (Human).